Reading from the N-terminus, the 304-residue chain is Acetylglutamate kinase (304 aa).

Substrate-binding positions include 69–70, Arg-91, and Asn-202; that span reads GG.

This sequence belongs to the acetylglutamate kinase family. ArgB subfamily.

The protein localises to the cytoplasm. The enzyme catalyses N-acetyl-L-glutamate + ATP = N-acetyl-L-glutamyl 5-phosphate + ADP. It functions in the pathway amino-acid biosynthesis; L-arginine biosynthesis; N(2)-acetyl-L-ornithine from L-glutamate: step 2/4. Catalyzes the ATP-dependent phosphorylation of N-acetyl-L-glutamate. The protein is Acetylglutamate kinase of Caulobacter vibrioides (strain ATCC 19089 / CIP 103742 / CB 15) (Caulobacter crescentus).